We begin with the raw amino-acid sequence, 248 residues long: 2,3-bisphosphoglycerate-dependent phosphoglycerate mutase (248 aa).

Substrate-binding positions include 8–15, 21–22, R60, 87–90, K98, 114–115, and 183–184; these read RHGESTWN, TG, ERHY, RR, and GN. The Tele-phosphohistidine intermediate role is filled by H9. E87 (proton donor/acceptor) is an active-site residue.

This sequence belongs to the phosphoglycerate mutase family. BPG-dependent PGAM subfamily. As to quaternary structure, homodimer.

The enzyme catalyses (2R)-2-phosphoglycerate = (2R)-3-phosphoglycerate. The protein operates within carbohydrate degradation; glycolysis; pyruvate from D-glyceraldehyde 3-phosphate: step 3/5. Functionally, catalyzes the interconversion of 2-phosphoglycerate and 3-phosphoglycerate. The protein is 2,3-bisphosphoglycerate-dependent phosphoglycerate mutase of Cupriavidus pinatubonensis (strain JMP 134 / LMG 1197) (Cupriavidus necator (strain JMP 134)).